Reading from the N-terminus, the 25-residue chain is Aurein-5.1 (25 aa).

Belongs to the frog skin active peptide (FSAP) family. Aurein subfamily. Expressed by the skin dorsal glands.

It is found in the secreted. In terms of biological role, has no antimicrobial or anticancer activity. The sequence is that of Aurein-5.1 from Ranoidea aurea (Green and golden bell frog).